The sequence spans 279 residues: Large ribosomal subunit protein uL2 (279 aa).

Residues 202 to 279 (NASIGKAGRS…TSRHKSKKKG (78 aa)) are disordered. Over residues 209-220 (GRSRWLGRRPHN) the composition is skewed to basic residues.

It belongs to the universal ribosomal protein uL2 family. Part of the 50S ribosomal subunit. Forms a bridge to the 30S subunit in the 70S ribosome.

Functionally, one of the primary rRNA binding proteins. Required for association of the 30S and 50S subunits to form the 70S ribosome, for tRNA binding and peptide bond formation. It has been suggested to have peptidyltransferase activity; this is somewhat controversial. Makes several contacts with the 16S rRNA in the 70S ribosome. This chain is Large ribosomal subunit protein uL2, found in Methylocella silvestris (strain DSM 15510 / CIP 108128 / LMG 27833 / NCIMB 13906 / BL2).